The primary structure comprises 677 residues: Methionine--tRNA ligase (677 aa).

The short motif at 15–25 (PYANGSIHLGH) is the 'HIGH' region element. Zn(2+) is bound by residues Cys146, Cys149, Cys159, and Cys162. The short motif at 333–337 (KMSKS) is the 'KMSKS' region element. Lys336 contacts ATP. In terms of domain architecture, tRNA-binding spans 575–677 (DFAKIDLRVA…DGAKPGQQVK (103 aa)).

This sequence belongs to the class-I aminoacyl-tRNA synthetase family. MetG type 1 subfamily. As to quaternary structure, homodimer. The cofactor is Zn(2+).

It is found in the cytoplasm. The enzyme catalyses tRNA(Met) + L-methionine + ATP = L-methionyl-tRNA(Met) + AMP + diphosphate. Its function is as follows. Is required not only for elongation of protein synthesis but also for the initiation of all mRNA translation through initiator tRNA(fMet) aminoacylation. The polypeptide is Methionine--tRNA ligase (Salmonella typhi).